The primary structure comprises 84 residues: Large ribosomal subunit protein eL34 (84 aa).

It belongs to the eukaryotic ribosomal protein eL34 family.

The protein is Large ribosomal subunit protein eL34 of Pyrobaculum islandicum (strain DSM 4184 / JCM 9189 / GEO3).